A 344-amino-acid chain; its full sequence is MWKIGQRGVPYFQRLIAAPFTTLRSLPTSLVETGQNRVIDASLTLIRERAKLKGELVRLIGGAKATTALLGVPLGHNSSFLEGPALAPPHVREAIWCGSTNSTTEEGKELKDPRVLSDVGDIPVQEIREMGVDDDRLMKVVSESVKLVMEEEPLRPLVIGGDHSISYPVVRAVSEKLGGPVDILHLDAHPDIYDRFEGNYYSHASSFARIMEGGYARRLLQVGIRSINKEGREQGKRFGVEQYEMRTFSKDRQMLENLKLGEGVKGVYISIDVDCLDPGFAHGVSHFEPGGLSFRDVLNILHNLQGDLVGADVVEYNPQRDTADDMTAMVAAKFVRELAAKMSK.

Residues methionine 1–leucine 26 constitute a chloroplast and mitochondrion transit peptide. Residues histidine 163, aspartate 187, histidine 189, and aspartate 191 each contribute to the Mn(2+) site. Residues histidine 189 to tyrosine 193, glutamate 197 to asparagine 199, and asparagine 228 contribute to the substrate site. Positions 272 and 274 each coordinate Mn(2+). Glutamate 315 is a binding site for substrate.

It belongs to the arginase family. Mn(2+) serves as cofactor. In terms of tissue distribution, expressed in vasculature of roots, root tips, leaves and cotyledons.

The protein localises to the mitochondrion. It is found in the plastid. The protein resides in the chloroplast. It carries out the reaction L-arginine + H2O = urea + L-ornithine. The catalysed reaction is agmatine + H2O = urea + putrescine. The protein operates within nitrogen metabolism; urea cycle; L-ornithine and urea from L-arginine: step 1/1. It functions in the pathway amine and polyamine biosynthesis; putrescine biosynthesis via agmatine pathway; putrescine from agmatine: step 1/1. In terms of biological role, catalyzes the hydrolysis of L-arginine to urea and L-ornithine. The latter can be utilized in the urea cycle or as a precursor for the synthesis of both polyamines and proline. Possesses agmatinase activity. Catalyzes the formation of putrescine from agmatine. The protein is Arginase 2, chloroplastic/mitochondrial (ARGAH2) of Arabidopsis thaliana (Mouse-ear cress).